A 581-amino-acid chain; its full sequence is Urease subunit alpha (581 aa).

The Urease domain maps to 134-581 (GGFDSHIHFI…LPMTQRYFLF (448 aa)). Residues His-139, His-141, and Lys-222 each coordinate Ni(2+). An N6-carboxylysine modification is found at Lys-222. Residue His-224 participates in substrate binding. The Ni(2+) site is built by His-251 and His-277. His-325 acts as the Proton donor in catalysis. Asp-365 lines the Ni(2+) pocket.

This sequence belongs to the metallo-dependent hydrolases superfamily. Urease alpha subunit family. Heterotrimer of UreA (gamma), UreB (beta) and UreC (alpha) subunits. Three heterotrimers associate to form the active enzyme. The cofactor is Ni cation. Carboxylation allows a single lysine to coordinate two nickel ions.

The protein resides in the cytoplasm. The catalysed reaction is urea + 2 H2O + H(+) = hydrogencarbonate + 2 NH4(+). It functions in the pathway nitrogen metabolism; urea degradation; CO(2) and NH(3) from urea (urease route): step 1/1. This chain is Urease subunit alpha, found in Albidiferax ferrireducens (strain ATCC BAA-621 / DSM 15236 / T118) (Rhodoferax ferrireducens).